Reading from the N-terminus, the 983-residue chain is Ephrin type-A receptor 3 (983 aa).

Residues 1–20 (MDCHLSILVLLGCCVLSCSG) form the signal peptide. At 21–540 (ELSPQPSNEV…SFSISGENSH (520 aa)) the chain is on the extracellular side. An Eph LBD domain is found at 29-206 (EVNLLDSKTI…YFKKCPFTVK (178 aa)). 5 N-linked (GlcNAc...) asparagine glycosylation sites follow: Asn-231, Asn-336, Asn-390, Asn-403, and Asn-492. Fibronectin type-III domains follow at residues 324–434 (PPSA…TNQA) and 435–530 (APSP…TSPD). A helical membrane pass occupies residues 541–564 (VVMIAISAAVAIIVLTVVTYVLVG). Residues 565–983 (RFCGYHKSKH…TQSKNGPVPV (419 aa)) are Cytoplasmic-facing. 2 positions are modified to phosphotyrosine; by autocatalysis: Tyr-596 and Tyr-602. Residues 621-882 (ISIDKVVGAG…QIVSILDKLI (262 aa)) form the Protein kinase domain. Residues 628–633 (GAGEFG), Lys-653, and 700–706 (EYMENGS) each bind ATP. At Tyr-701 the chain carries Phosphotyrosine; by autocatalysis. The active-site Proton acceptor is Asp-746. ATP is bound at residue 750-751 (RN). Position 779 is a phosphotyrosine; by autocatalysis (Tyr-779). The SAM domain occupies 911 to 975 (ATFHTTGDWL…ISTIKALETQ (65 aa)). Tyr-937 is subject to Phosphotyrosine. Residues 981-983 (VPV) carry the PDZ-binding motif.

It belongs to the protein kinase superfamily. Tyr protein kinase family. Ephrin receptor subfamily. In terms of assembly, heterotetramer upon binding of the ligand. The heterotetramer is composed of an ephrin dimer and a receptor dimer. Oligomerization is probably required to induce biological responses. Forms a ternary EFNA5-EPHA3-ADAM10 complex mediating EFNA5 extracellular domain shedding by ADAM10 which regulates the EFNA5-EPHA3 complex internalization and function. Interacts (phosphorylated) with PTPN1; dephosphorylates EPHA3 and may regulate its trafficking and function. Interacts (phosphorylated) with CRK; mediates EFNA5-EPHA3 signaling through RHOA GTPase activation. Interacts with NCK1 (via SH2 domain); mediates EFNA5-EPHA3 signaling. Autophosphorylates upon activation by EFNA5. Phosphorylation on Tyr-602 mediates interaction with NCK1. Dephosphorylated by PTPN1. Greatest levels of expression occurring in the brain, also detected in testis. Expressed in myogenic progenitor cells.

Its subcellular location is the cell membrane. The protein resides in the secreted. It catalyses the reaction L-tyrosyl-[protein] + ATP = O-phospho-L-tyrosyl-[protein] + ADP + H(+). Functionally, receptor tyrosine kinase which binds promiscuously membrane-bound ephrin family ligands residing on adjacent cells, leading to contact-dependent bidirectional signaling into neighboring cells. The signaling pathway downstream of the receptor is referred to as forward signaling while the signaling pathway downstream of the ephrin ligand is referred to as reverse signaling. Highly promiscuous for ephrin-A ligands it binds preferentially EFNA5. Upon activation by EFNA5 regulates cell-cell adhesion, cytoskeletal organization and cell migration. Plays a role in cardiac cells migration and differentiation and regulates the formation of the atrioventricular canal and septum during development probably through activation by EFNA1. Involved in the retinotectal mapping of neurons. May also control the segregation but not the guidance of motor and sensory axons during neuromuscular circuit development. The protein is Ephrin type-A receptor 3 (Epha3) of Mus musculus (Mouse).